The primary structure comprises 495 residues: Two-component response regulator-like APRR3 (495 aa).

One can recognise a Response regulatory domain in the interval 65-183 (KVLLVENDDS…ELKNLWQHVW (119 aa)). Disordered stretches follow at residues 188-441 (SSSG…RWAQ) and 465-495 (HSRKKLAEQRPHVKGQFIRKRDDHKSGSEDN). Polar residues predominate over residues 206-217 (PESTQGSENDAS). A compositionally biased stretch (low complexity) spans 231–248 (GLSNQDGGSDNGSGTQSS). Over residues 256–265 (TKSTSPSNQF) the composition is skewed to polar residues. The segment covering 284 to 293 (RLKEAEDQKE) has biased composition (basic and acidic residues). Polar residues predominate over residues 294–304 (QIGTGSQTGMS). The span at 307 to 319 (KKAEEPGDLEKNA) shows a compositional bias: basic and acidic residues. A compositionally biased stretch (polar residues) spans 335-350 (NRSSGNSQVESKAPSS). Positions 349 to 372 (SSNREDLQSLEQTLKKTREDRDYK) form a coiled coil. A compositionally biased stretch (basic and acidic residues) spans 351–378 (NREDLQSLEQTLKKTREDRDYKVGDRSV). Composition is skewed to polar residues over residues 380–395 (RHSNLSAFSKYNNGAT) and 420–436 (GSSSSSDNPLKQQSSGS). Positions 442-484 (REAALMKFRLKRKERCFEKKVRYHSRKKLAEQRPHVKGQFIRK) constitute a CCT domain. Residues 483 to 495 (RKRDDHKSGSEDN) are compositionally biased toward basic and acidic residues.

The protein belongs to the ARR-like family. In terms of assembly, interacts with APRR1/TOC1 (via N-terminus). Post-translationally, phosphorylated by WNK1; during the night. Phosphorylation is required for optimal interaction with APRR1/TOC1.

The protein localises to the nucleus. In terms of biological role, controls photoperiodic flowering response. Component of the circadian clock. Controls the degradation of APRR1/TOC1 by the SCF(ZTL) complex. Expression of several members of the ARR-like family is controlled by circadian rhythm. The particular coordinated sequential expression of APRR9, APRR7, APRR5, APRR3 and APPR1 result to circadian waves that may be at the basis of the endogenous circadian clock. The protein is Two-component response regulator-like APRR3 (APRR3) of Arabidopsis thaliana (Mouse-ear cress).